Consider the following 343-residue polypeptide: tRNA N6-adenosine threonylcarbamoyltransferase (343 aa).

The Fe cation site is built by H112 and H116. Residues 135 to 139 (LVSGG), D168, G181, and N273 each bind substrate. Fe cation is bound at residue D301.

Belongs to the KAE1 / TsaD family. The cofactor is Fe(2+).

It localises to the cytoplasm. The enzyme catalyses L-threonylcarbamoyladenylate + adenosine(37) in tRNA = N(6)-L-threonylcarbamoyladenosine(37) in tRNA + AMP + H(+). Functionally, required for the formation of a threonylcarbamoyl group on adenosine at position 37 (t(6)A37) in tRNAs that read codons beginning with adenine. Is involved in the transfer of the threonylcarbamoyl moiety of threonylcarbamoyl-AMP (TC-AMP) to the N6 group of A37, together with TsaE and TsaB. TsaD likely plays a direct catalytic role in this reaction. The polypeptide is tRNA N6-adenosine threonylcarbamoyltransferase (Azoarcus sp. (strain BH72)).